Consider the following 462-residue polypeptide: UDP-N-acetylmuramoylalanine--D-glutamate ligase (462 aa).

ATP is bound at residue 111 to 117 (GTNGKTT).

Belongs to the MurCDEF family.

It localises to the cytoplasm. It carries out the reaction UDP-N-acetyl-alpha-D-muramoyl-L-alanine + D-glutamate + ATP = UDP-N-acetyl-alpha-D-muramoyl-L-alanyl-D-glutamate + ADP + phosphate + H(+). The protein operates within cell wall biogenesis; peptidoglycan biosynthesis. Functionally, cell wall formation. Catalyzes the addition of glutamate to the nucleotide precursor UDP-N-acetylmuramoyl-L-alanine (UMA). This Trichodesmium erythraeum (strain IMS101) protein is UDP-N-acetylmuramoylalanine--D-glutamate ligase.